Reading from the N-terminus, the 411-residue chain is Serpin A12 (411 aa).

The first 20 residues, Met-1–Leu-20, serve as a signal peptide directing secretion. N-linked (GlcNAc...) asparagine glycans are attached at residues Asn-92 and Asn-267. The reactive center loop stretch occupies residues Gly-364–Arg-382.

This sequence belongs to the serpin family. Forms a stable complex with KLK7. In terms of processing, glycosylation slightly decreases affinity for heparin, but otherwise has no significant effect on KLK7 inhibitory activity or thermal stability of the protein. In terms of tissue distribution, expressed in visceral adipose tissues.

Its subcellular location is the secreted. Its activity is regulated as follows. Inhibition of KLK7 is enhanced by heparin. Adipokine that modulates insulin action by specifically inhibiting its target protease KLK7 in white adipose tissues. In Rattus norvegicus (Rat), this protein is Serpin A12 (Serpina12).